A 120-amino-acid chain; its full sequence is Large ribosomal subunit protein uL18 (120 aa).

The protein belongs to the universal ribosomal protein uL18 family. In terms of assembly, part of the 50S ribosomal subunit; part of the 5S rRNA/L5/L18/L25 subcomplex. Contacts the 5S and 23S rRNAs.

Its function is as follows. This is one of the proteins that bind and probably mediate the attachment of the 5S RNA into the large ribosomal subunit, where it forms part of the central protuberance. This chain is Large ribosomal subunit protein uL18, found in Methylocella silvestris (strain DSM 15510 / CIP 108128 / LMG 27833 / NCIMB 13906 / BL2).